The following is a 220-amino-acid chain: Botcinic acid biosynthesis cluster B protein 12 (220 aa).

The protein operates within polyketide biosynthesis. Functionally, part of the gene cluster B that mediates the biosynthesis of botcinic acid and its botcinin derivatives, acetate-derived polyketides that contribute to virulence when combined with the sesquiterpene botrydial. Botcinic acid and its derivatives have been shown to induce chlorosis and necrosis during host plant infection, but also have antifungal activities. Two polyketide synthases, BOA6 and BOA9, are involved in the biosynthesis of botcinins. BOA6 mediates the formation of the per-methylated tetraketide core by condensation of four units of malonyl-CoA with one unit of acetyl-CoA, which would be methylated in activated methylene groups to yield a bicyclic acid intermediate that could then either be converted to botrylactone derivatives or lose the starter acetate unit through a retro-Claisen type C-C bond cleavage to yield botcinin derivatives. The second polyketide synthase, BOA9, is probably required for the biosynthesis of the tetraketide side chain of botcinins. The methyltransferase (MT) domain within BOA6 is probably responsible for the incorporation of four methyl groups. The trans-enoyl reductase BOA5 might take over the enoyl reductase function of BOA6 that misses an ER domain. The monooxygenases BOA2, BOA3 and BOA4 might be involved in further hydroxylations at C4, C5 and C8, whereas BOA7, close to BOA9, could potentially be involved in the hydroxylation at C4 in the side chain of botcinins. This Botryotinia fuckeliana (strain B05.10) (Noble rot fungus) protein is Botcinic acid biosynthesis cluster B protein 12.